The chain runs to 485 residues: MTLAETFNTENHPNPLITLNYEPALESLGNDYYDEVTAAEFPQLTLRWRNDAILPRLGLDPQTVTDEDFITAFGLFQGRKPLLALRYHGYQFGEYNPNLGDGRGFLYGQVRGTDGELYDFGTKGSGRTPYSRGGDGMLTLKGGVREVLAAEALHQLGVRTSRCLTMIETGLGLWRGDEPSPTRSSVMVRMNKSHIRFGTFERLHYFQRSDLIKKLLDHVIEHYYQHLTHESDKYALFYAELVKRVAELVAQWMAAGFCHAVLNTDNMSITGESFDYGPYAFIPTYNPYFTAAYFDYYGRYCYIQQPSICQWNLEMLQVPLRAVIDKADMEAGLAKFNEYCHAEYHSLMLKKLGFEQLTTPEAEELLSLTLKFLQESQVGYHQFFYEMARTFSVKWRDEPGLVLSGSDIVPPSGTDANFDNWCVLYHKILNNFDYEQVKIIAQNLTYYNPKTSLLRPTIEEAWEPIVQEDNWQPFYDLVKSIQSRG.

G100, G102, R103, K123, D135, G136, R189, and R196 together coordinate ATP. Residue D265 is the Proton acceptor of the active site. The Mg(2+) site is built by N266 and D275. D275 contributes to the ATP binding site.

Belongs to the SELO family. Mg(2+) serves as cofactor. Mn(2+) is required as a cofactor.

It carries out the reaction L-seryl-[protein] + ATP = 3-O-(5'-adenylyl)-L-seryl-[protein] + diphosphate. It catalyses the reaction L-threonyl-[protein] + ATP = 3-O-(5'-adenylyl)-L-threonyl-[protein] + diphosphate. The catalysed reaction is L-tyrosyl-[protein] + ATP = O-(5'-adenylyl)-L-tyrosyl-[protein] + diphosphate. The enzyme catalyses L-histidyl-[protein] + UTP = N(tele)-(5'-uridylyl)-L-histidyl-[protein] + diphosphate. It carries out the reaction L-seryl-[protein] + UTP = O-(5'-uridylyl)-L-seryl-[protein] + diphosphate. It catalyses the reaction L-tyrosyl-[protein] + UTP = O-(5'-uridylyl)-L-tyrosyl-[protein] + diphosphate. Nucleotidyltransferase involved in the post-translational modification of proteins. It can catalyze the addition of adenosine monophosphate (AMP) or uridine monophosphate (UMP) to a protein, resulting in modifications known as AMPylation and UMPylation. In Trichormus variabilis (strain ATCC 29413 / PCC 7937) (Anabaena variabilis), this protein is Protein nucleotidyltransferase YdiU.